We begin with the raw amino-acid sequence, 290 residues long: Protease HtpX homolog (290 aa).

2 helical membrane-spanning segments follow: residues 5–27 (MWLR…GYLF) and 32–51 (VAFI…YWYS). His133 is a binding site for Zn(2+). The active site involves Glu134. His137 serves as a coordination point for Zn(2+). 2 consecutive transmembrane segments (helical) span residues 143–163 (ILIG…AYWA) and 182–202 (IIGA…IQAA). Glu208 is a binding site for Zn(2+).

This sequence belongs to the peptidase M48B family. Zn(2+) serves as cofactor.

The protein localises to the cell membrane. This Thermococcus kodakarensis (strain ATCC BAA-918 / JCM 12380 / KOD1) (Pyrococcus kodakaraensis (strain KOD1)) protein is Protease HtpX homolog.